Reading from the N-terminus, the 394-residue chain is E3 ubiquitin-protein ligase RNF149 (394 aa).

Residues 1-31 form the signal peptide; that stretch reads MAARRRPAAGVGARDALAVLALALCTPGVGG. N-linked (GlcNAc...) asparagine glycosylation is found at N51 and N141. Positions 66-171 constitute a PA domain; the sequence is SSLREERQGL…PKGREIFDLV (106 aa). A helical transmembrane segment spans residues 197–217; that stretch reads VVFVAIAFITMMIISLAWLIF. The RING-type; atypical zinc finger occupies 265–306; that stretch reads CAVCIENFKVKDVIRILPCKHIFHRICIDPWLLDHRTCPMCK. The segment at 321 to 394 is disordered; it reads DTQELPTPEA…SEPQHGGSIC (74 aa). T327 carries the post-translational modification Phosphothreonine. N339 carries N-linked (GlcNAc...) asparagine glycosylation. 2 positions are modified to phosphoserine: S341 and S344. Low complexity predominate over residues 352–362; sequence SNLPSSSSSES.

It is found in the membrane. The enzyme catalyses S-ubiquitinyl-[E2 ubiquitin-conjugating enzyme]-L-cysteine + [acceptor protein]-L-lysine = [E2 ubiquitin-conjugating enzyme]-L-cysteine + N(6)-ubiquitinyl-[acceptor protein]-L-lysine.. The protein operates within protein modification; protein ubiquitination. E3 ubiquitin-protein ligase. Ubiquitinates BRAF, inducing its proteasomal degradation. The protein is E3 ubiquitin-protein ligase RNF149 (Rnf149) of Mus musculus (Mouse).